We begin with the raw amino-acid sequence, 371 residues long: COP9 signalosome complex subunit 5 (371 aa).

The region spanning V51–G188 is the MPN domain. Zn(2+)-binding residues include H134, H136, and D147. The JAMM motif motif lies at H134–D147. Residues N278–T292 show a composition bias toward low complexity. Disordered stretches follow at residues N278 to T333 and T352 to Y371. The span at K293 to S313 shows a compositional bias: basic and acidic residues. Residues N323–T333 are compositionally biased toward polar residues.

The protein belongs to the peptidase M67A family. CSN5 subfamily. Component of the COP9 signalosome (CSN) complex.

It localises to the cytoplasm. The protein resides in the nucleus. Functionally, catalytic Component of the COP9 signalosome (CSN) complex that acts as an regulator of the ubiquitin (Ubl) conjugation pathway by mediating the deneddylation of the cullin subunit of SCF-type E3 ubiquitin-protein ligase complexes. The chain is COP9 signalosome complex subunit 5 (RRI1) from Cryptococcus neoformans var. neoformans serotype D (strain B-3501A) (Filobasidiella neoformans).